The following is a 95-amino-acid chain: Small ribosomal subunit protein uS19 (95 aa).

It belongs to the universal ribosomal protein uS19 family.

Protein S19 forms a complex with S13 that binds strongly to the 16S ribosomal RNA. This chain is Small ribosomal subunit protein uS19, found in Thermosipho melanesiensis (strain DSM 12029 / CIP 104789 / BI429).